The sequence spans 930 residues: Isoleucine--tRNA ligase (930 aa).

A 'HIGH' region motif is present at residues 57 to 67 (PYANGNIHVGH). Residue Glu-554 coordinates L-isoleucyl-5'-AMP. The short motif at 595–599 (KMSKS) is the 'KMSKS' region element. Lys-598 contributes to the ATP binding site. The Zn(2+) site is built by Cys-888, Cys-891, Cys-908, and Cys-911.

It belongs to the class-I aminoacyl-tRNA synthetase family. IleS type 1 subfamily. Monomer. Zn(2+) serves as cofactor.

Its subcellular location is the cytoplasm. It carries out the reaction tRNA(Ile) + L-isoleucine + ATP = L-isoleucyl-tRNA(Ile) + AMP + diphosphate. Its function is as follows. Catalyzes the attachment of isoleucine to tRNA(Ile). As IleRS can inadvertently accommodate and process structurally similar amino acids such as valine, to avoid such errors it has two additional distinct tRNA(Ile)-dependent editing activities. One activity is designated as 'pretransfer' editing and involves the hydrolysis of activated Val-AMP. The other activity is designated 'posttransfer' editing and involves deacylation of mischarged Val-tRNA(Ile). The protein is Isoleucine--tRNA ligase of Streptococcus pneumoniae (strain P1031).